A 95-amino-acid chain; its full sequence is Small ribosomal subunit protein bS6 (95 aa).

This sequence belongs to the bacterial ribosomal protein bS6 family.

Binds together with bS18 to 16S ribosomal RNA. This Bacillus licheniformis (strain ATCC 14580 / DSM 13 / JCM 2505 / CCUG 7422 / NBRC 12200 / NCIMB 9375 / NCTC 10341 / NRRL NRS-1264 / Gibson 46) protein is Small ribosomal subunit protein bS6.